The sequence spans 511 residues: UDP-N-acetylmuramate--L-alanine ligase (511 aa).

127–133 (GTHGKTT) lines the ATP pocket. The disordered stretch occupies residues 481 to 511 (VGTVPGGEVGGATTIGGTVPGGSAPGASAAG). Residues 484–504 (VPGGEVGGATTIGGTVPGGSA) are compositionally biased toward gly residues.

It belongs to the MurCDEF family.

It localises to the cytoplasm. The enzyme catalyses UDP-N-acetyl-alpha-D-muramate + L-alanine + ATP = UDP-N-acetyl-alpha-D-muramoyl-L-alanine + ADP + phosphate + H(+). Its pathway is cell wall biogenesis; peptidoglycan biosynthesis. Cell wall formation. This is UDP-N-acetylmuramate--L-alanine ligase from Salinispora arenicola (strain CNS-205).